We begin with the raw amino-acid sequence, 517 residues long: Ribonuclease Y (517 aa).

A helical transmembrane segment spans residues 1–21 (MIEFLIGLIAAVVGILVGYLI). Residues 207 to 271 (LINVVNIKND…IAVRTVELLV (65 aa)) enclose the KH domain. Residues 333-426 (ALIHSLEVAH…VCTADVLSAA (94 aa)) form the HD domain.

Belongs to the RNase Y family.

Its subcellular location is the cell membrane. Endoribonuclease that initiates mRNA decay. This Campylobacter hominis (strain ATCC BAA-381 / DSM 21671 / CCUG 45161 / LMG 19568 / NCTC 13146 / CH001A) protein is Ribonuclease Y.